The primary structure comprises 21 residues: Tertiapin (21 aa).

Cystine bridges form between cysteine 3–cysteine 14 and cysteine 5–cysteine 18.

Post-translationally, oxidation of Met-13 results in the loss of biological activity. In terms of processing, an amidation at Lys-21 is suggested in Ref.1. As to expression, expressed by the venom gland.

The protein resides in the secreted. Functionally, presynaptic neurotoxin that blocks the inwardly rectifying Kir1.1/KCNJ1 and Kir3.1/3.4 (KCNJ3/KCNJ5) potassium channels with high affinity by binding to the M1-M2 linker region of these channels in a 1:1 stoichiometry. It may block the potassium channel pore by occluding its alpha helix into the channel vestibule. Tertiapin-Q also inhibits calcium-activated large conductance BK-type (KCNMA) potassium channels in a concentration-, and voltage-dependent manner, in addition to inhibiting Kir3.1/3.2 (KCNJ3/KCNJ6) heteromultimers potassium channels. It can prevent dose-dependently acetylcholine(ACh)-induced atrioventricular blocks in mammalian hearts, as KCNJ3/KCNJ5 channels (also named I(KACh), because these channels are activated by ACh) are found in mammalian myocytes. Interacts specifically with calmodulin in the presence of calcium. This Apis mellifera (Honeybee) protein is Tertiapin.